A 378-amino-acid chain; its full sequence is Queuine tRNA-ribosyltransferase (378 aa).

D90 functions as the Proton acceptor in the catalytic mechanism. Residues 90-94 (DSGGF), D144, Q188, and G220 each bind substrate. The tract at residues 251 to 257 (GVGTPED) is RNA binding. D270 functions as the Nucleophile in the catalytic mechanism. Positions 275-279 (TRNAR) are RNA binding; important for wobble base 34 recognition. C308, C310, C313, and H339 together coordinate Zn(2+).

The protein belongs to the queuine tRNA-ribosyltransferase family. Homodimer. Within each dimer, one monomer is responsible for RNA recognition and catalysis, while the other monomer binds to the replacement base PreQ1. Requires Zn(2+) as cofactor.

It carries out the reaction 7-aminomethyl-7-carbaguanine + guanosine(34) in tRNA = 7-aminomethyl-7-carbaguanosine(34) in tRNA + guanine. Its pathway is tRNA modification; tRNA-queuosine biosynthesis. Functionally, catalyzes the base-exchange of a guanine (G) residue with the queuine precursor 7-aminomethyl-7-deazaguanine (PreQ1) at position 34 (anticodon wobble position) in tRNAs with GU(N) anticodons (tRNA-Asp, -Asn, -His and -Tyr). Catalysis occurs through a double-displacement mechanism. The nucleophile active site attacks the C1' of nucleotide 34 to detach the guanine base from the RNA, forming a covalent enzyme-RNA intermediate. The proton acceptor active site deprotonates the incoming PreQ1, allowing a nucleophilic attack on the C1' of the ribose to form the product. After dissociation, two additional enzymatic reactions on the tRNA convert PreQ1 to queuine (Q), resulting in the hypermodified nucleoside queuosine (7-(((4,5-cis-dihydroxy-2-cyclopenten-1-yl)amino)methyl)-7-deazaguanosine). This Nautilia profundicola (strain ATCC BAA-1463 / DSM 18972 / AmH) protein is Queuine tRNA-ribosyltransferase.